Consider the following 297-residue polypeptide: tRNA dimethylallyltransferase (297 aa).

10-17 (GITASGKS) is a binding site for ATP. A substrate-binding site is contributed by 12-17 (TASGKS). Positions 36-39 (DSKQ) are interaction with substrate tRNA.

Belongs to the IPP transferase family. Monomer. Mg(2+) is required as a cofactor.

The enzyme catalyses adenosine(37) in tRNA + dimethylallyl diphosphate = N(6)-dimethylallyladenosine(37) in tRNA + diphosphate. In terms of biological role, catalyzes the transfer of a dimethylallyl group onto the adenine at position 37 in tRNAs that read codons beginning with uridine, leading to the formation of N6-(dimethylallyl)adenosine (i(6)A). This chain is tRNA dimethylallyltransferase, found in Wolbachia pipientis wMel.